We begin with the raw amino-acid sequence, 302 residues long: Recombination-associated protein RdgC (302 aa).

Belongs to the RdgC family.

It is found in the cytoplasm. The protein resides in the nucleoid. May be involved in recombination. The chain is Recombination-associated protein RdgC from Actinobacillus succinogenes (strain ATCC 55618 / DSM 22257 / CCUG 43843 / 130Z).